The chain runs to 388 residues: Pepsin A-1 (388 aa).

An N-terminal signal peptide occupies residues 1–15; that stretch reads MKWLLLLGLVALSEC. 2 consecutive propeptides (activation peptide) follow at residues 16-40 and 41-62; these read IIYK…LLKD and FLKK…APTL. Positions 76 to 385 constitute a Peptidase A1 domain; it reads YFGTIGIGTP…DRANNQVGLA (310 aa). Asp94 is a catalytic residue. Cys107 and Cys112 are disulfide-bonded. Ser130 bears the Phosphoserine mark. A disulfide bond links Cys268 and Cys272. Asp277 is a catalytic residue. Cys311 and Cys344 are disulfide-bonded.

It belongs to the peptidase A1 family. Post-translationally, each pepsinogen is converted to corresponding pepsin at pH 2.0 in part as a result of the release of a 47 AA activation segment and in part as a result of stepwise proteolytic cleavage via an intermediate form(s).

Its subcellular location is the secreted. The catalysed reaction is Preferential cleavage: hydrophobic, preferably aromatic, residues in P1 and P1' positions. Cleaves 1-Phe-|-Val-2, 4-Gln-|-His-5, 13-Glu-|-Ala-14, 14-Ala-|-Leu-15, 15-Leu-|-Tyr-16, 16-Tyr-|-Leu-17, 23-Gly-|-Phe-24, 24-Phe-|-Phe-25 and 25-Phe-|-Tyr-26 bonds in the B chain of insulin.. Shows particularly broad specificity; although bonds involving phenylalanine and leucine are preferred, many others are also cleaved to some extent. The protein is Pepsin A-1 (PGA) of Macaca fuscata fuscata (Japanese macaque).